The primary structure comprises 216 residues: Putative ripening-related protein 4 (216 aa).

The N-terminal stretch at 1–25 (MAANVKVLVVLALLQLMSLHAVVHG) is a signal peptide.

This sequence belongs to the kiwellin family.

The protein localises to the secreted. The chain is Putative ripening-related protein 4 from Oryza sativa subsp. japonica (Rice).